Here is a 431-residue protein sequence, read N- to C-terminus: Putative F-box/FBD/LRR-repeat protein At4g26350 (431 aa).

One can recognise an F-box domain in the interval 1 to 47 (MDIISQCPDHLLLRILSFIPTKDVIVTSLLSKRWGSLWRWVPKLEYD). LRR repeat units follow at residues 52–78 (NMRF…HLKN), 85–109 (CRTV…EISI), 132–159 (ILTI…HLRC), 160–185 (IGWA…RLAR), and 309–334 (CTQG…TLTN). Residues 348-398 (CWKRPSSVPACLLSSLQAFTWSGYKGRQGDKEVVKYVLRNATGLKKRIFIS) enclose the FBD domain.

The chain is Putative F-box/FBD/LRR-repeat protein At4g26350 from Arabidopsis thaliana (Mouse-ear cress).